The following is a 79-amino-acid chain: Conotoxin ArMSGL-0121 (79 aa).

The first 20 residues, 1–20 (MSRLGIMVLTLLLLVFIVTS), serve as a signal peptide directing secretion. The propeptide occupies 21 to 44 (HQDAGEKQATQRNAINFRWRRSFT). 3 disulfides stabilise this stretch: Cys52–Cys64, Cys56–Cys73, and Cys63–Cys77. Leu78 bears the Leucine amide mark.

The protein belongs to the conotoxin O3 superfamily. Expressed by the venom duct.

The protein resides in the secreted. In Conus arenatus (Sand-dusted cone), this protein is Conotoxin ArMSGL-0121.